The primary structure comprises 498 residues: GTPase Der (498 aa).

EngA-type G domains are found at residues 3 to 166 (PVVA…FEEL) and 212 to 385 (IKFA…RSAT). GTP-binding positions include 9–16 (GRPNVGKS), 56–60 (DTGGI), 118–121 (NKTD), 218–225 (GRPNVGKS), 265–269 (DTAGV), and 330–333 (NKWD). The region spanning 386 to 470 (KRISTSMLTR…PIHIEFQEGD (85 aa)) is the KH-like domain.

Belongs to the TRAFAC class TrmE-Era-EngA-EngB-Septin-like GTPase superfamily. EngA (Der) GTPase family. As to quaternary structure, associates with the 50S ribosomal subunit.

In terms of biological role, GTPase that plays an essential role in the late steps of ribosome biogenesis. This Tolumonas auensis (strain DSM 9187 / NBRC 110442 / TA 4) protein is GTPase Der.